We begin with the raw amino-acid sequence, 331 residues long: DNA-directed RNA polymerase subunit alpha (331 aa).

The alpha N-terminal domain (alpha-NTD) stretch occupies residues 1–226; the sequence is MLIAQRPTLT…ELFGLCRELN (226 aa). Positions 243–331 are alpha C-terminal domain (alpha-CTD); it reads TNPEMAVPIE…GGTFFSPEDE (89 aa).

It belongs to the RNA polymerase alpha chain family. Homodimer. The RNAP catalytic core consists of 2 alpha, 1 beta, 1 beta' and 1 omega subunit. When a sigma factor is associated with the core the holoenzyme is formed, which can initiate transcription.

The enzyme catalyses RNA(n) + a ribonucleoside 5'-triphosphate = RNA(n+1) + diphosphate. Functionally, DNA-dependent RNA polymerase catalyzes the transcription of DNA into RNA using the four ribonucleoside triphosphates as substrates. This Bifidobacterium longum (strain NCC 2705) protein is DNA-directed RNA polymerase subunit alpha.